Here is a 272-residue protein sequence, read N- to C-terminus: 3-methyl-2-oxobutanoate hydroxymethyltransferase (272 aa).

D54 and D93 together coordinate Mg(2+). Residues 54–55 (DS), D93, and K121 contribute to the 3-methyl-2-oxobutanoate site. E123 is a Mg(2+) binding site. The Proton acceptor role is filled by E190.

Belongs to the PanB family. In terms of assembly, homodecamer; pentamer of dimers. The cofactor is Mg(2+).

The protein resides in the cytoplasm. It carries out the reaction 3-methyl-2-oxobutanoate + (6R)-5,10-methylene-5,6,7,8-tetrahydrofolate + H2O = 2-dehydropantoate + (6S)-5,6,7,8-tetrahydrofolate. Its pathway is cofactor biosynthesis; (R)-pantothenate biosynthesis; (R)-pantoate from 3-methyl-2-oxobutanoate: step 1/2. Catalyzes the reversible reaction in which hydroxymethyl group from 5,10-methylenetetrahydrofolate is transferred onto alpha-ketoisovalerate to form ketopantoate. The sequence is that of 3-methyl-2-oxobutanoate hydroxymethyltransferase from Janthinobacterium sp. (strain Marseille) (Minibacterium massiliensis).